The following is a 473-amino-acid chain: Eukaryotic translation initiation factor 2 subunit gamma (473 aa).

Residues 40–250 form the tr-type G domain; the sequence is QATINIGTIG…AICNIAPPNY (211 aa). The segment at 49-56 is G1; the sequence is GHVAHGKS. 52–57 serves as a coordination point for GTP; it reads AHGKSS. A G2 region spans residues 77–81; it reads NITIK. The tract at residues 135–138 is G3; sequence DCPG. Residues 193-196 and 228-230 each bind GTP; these read NKMD and SAQ. Positions 193–196 are G4; it reads NKMD. Residues 228-230 form a G5 region; that stretch reads SAQ. The segment at 458–470 is interacts with CDC123; that stretch reads GKVRSGGTLCEVV.

This sequence belongs to the TRAFAC class translation factor GTPase superfamily. Classic translation factor GTPase family. EIF2G subfamily. In terms of assembly, eukaryotic translation initiation factor 2 eIF2 is a heterotrimeric complex composed of an alpha, a beta and a gamma subunit. The factors eIF-1, eIF-2, eIF-3, TIF5/eIF-5 and methionyl-tRNAi form a multifactor complex (MFC) that may bind to the 40S ribosome.

The protein resides in the cytoplasm. It is found in the cytosol. The catalysed reaction is GTP + H2O = GDP + phosphate + H(+). In terms of biological role, as a subunit of eukaryotic initiation factor 2 eIF2, involved in the early steps of protein synthesis. In the presence of GTP, eIF-2 forms a ternary complex with initiator tRNA Met-tRNAi and then recruits the 40S ribosomal complex and initiation factors eIF-1, eIF-1A and eIF-3 to form the 43S pre-initiation complex (43S PIC), a step that determines the rate of protein translation. The 43S PIC binds to mRNA and scans downstream to the initiation codon, where it forms a 48S initiation complex by codon-anticodon base pairing. This leads to the displacement of eIF-1 to allow GTPase-activating protein (GAP) eIF-5-mediated hydrolysis of eIF2-bound GTP. Hydrolysis of GTP and release of Pi, which makes GTP hydrolysis irreversible, causes the release of the eIF-2-GDP binary complex from the 40S subunit, an event that is essential for the subsequent joining of the 60S ribosomal subunit to form an elongation-competent 80S ribosome. In order for eIF-2 to recycle and catalyze another round of initiation, the GDP bound to eIF-2 must be exchanged with GTP by way of a reaction catalyzed by GDP-GTP exchange factor (GEF) eIF-2B. The protein is Eukaryotic translation initiation factor 2 subunit gamma of Cryptococcus neoformans var. grubii serotype A (strain H99 / ATCC 208821 / CBS 10515 / FGSC 9487) (Filobasidiella neoformans var. grubii).